Consider the following 228-residue polypeptide: Urease accessory protein UreF (228 aa).

The protein belongs to the UreF family. In terms of assembly, ureD, UreF and UreG form a complex that acts as a GTP-hydrolysis-dependent molecular chaperone, activating the urease apoprotein by helping to assemble the nickel containing metallocenter of UreC. The UreE protein probably delivers the nickel.

Its subcellular location is the cytoplasm. Its function is as follows. Required for maturation of urease via the functional incorporation of the urease nickel metallocenter. This Dechloromonas aromatica (strain RCB) protein is Urease accessory protein UreF.